A 617-amino-acid polypeptide reads, in one-letter code: Type VII secretion systems protein EssD (617 aa).

The segment at 420–448 is disordered; the sequence is QNHVTHGPKDSMVRSEGKHSISSHEMNSS. Residues 426-438 are compositionally biased toward basic and acidic residues; that stretch reads GPKDSMVRSEGKH.

It belongs to the EssD family. Interacts (via C-terminal) with EssG; this interaction blocks EssD activity. Interacts with EssE.

It is found in the secreted. Its subcellular location is the cell membrane. In terms of biological role, component of the type VII secretion system (Ess). Plays a role in Ess secretion during infection. Required for the efficient secretion of EsxA. Required for abscess formation and staphylococcal persistence in host tissue. Possesses a toxic DNase activity that is modulated by EssG by forming a nuclease toxin-antitoxin pair. This nuclease toxin targets competitor bacteria. The polypeptide is Type VII secretion systems protein EssD (Staphylococcus aureus (strain Newman)).